The following is a 182-amino-acid chain: ATP-dependent protease subunit HslV (182 aa).

Residue T10 is part of the active site. The Na(+) site is built by A166, C169, and S172.

Belongs to the peptidase T1B family. HslV subfamily. In terms of assembly, a double ring-shaped homohexamer of HslV is capped on each side by a ring-shaped HslU homohexamer. The assembly of the HslU/HslV complex is dependent on binding of ATP.

The protein resides in the cytoplasm. It carries out the reaction ATP-dependent cleavage of peptide bonds with broad specificity.. Allosterically activated by HslU binding. Functionally, protease subunit of a proteasome-like degradation complex believed to be a general protein degrading machinery. The chain is ATP-dependent protease subunit HslV from Rickettsia peacockii (strain Rustic).